A 421-amino-acid polypeptide reads, in one-letter code: Dihydroorotase (421 aa).

Residues His59 and His61 each coordinate Zn(2+). Substrate-binding positions include 61–63 (HLR) and Asn93. Zn(2+)-binding residues include Asp150, His177, and His230. Substrate is bound at residue Asn276. Asp303 lines the Zn(2+) pocket. Residue Asp303 is part of the active site. His307 contributes to the substrate binding site.

It belongs to the metallo-dependent hydrolases superfamily. DHOase family. Class I DHOase subfamily. Requires Zn(2+) as cofactor.

The catalysed reaction is (S)-dihydroorotate + H2O = N-carbamoyl-L-aspartate + H(+). The protein operates within pyrimidine metabolism; UMP biosynthesis via de novo pathway; (S)-dihydroorotate from bicarbonate: step 3/3. Catalyzes the reversible cyclization of carbamoyl aspartate to dihydroorotate. This is Dihydroorotase from Desulfotalea psychrophila (strain LSv54 / DSM 12343).